The chain runs to 85 residues: Putative membrane protein insertion efficiency factor (85 aa).

This sequence belongs to the UPF0161 family.

The protein resides in the cell inner membrane. Could be involved in insertion of integral membrane proteins into the membrane. This chain is Putative membrane protein insertion efficiency factor, found in Shewanella woodyi (strain ATCC 51908 / MS32).